A 352-amino-acid chain; its full sequence is Photosystem II D2 protein (352 aa).

At T2 the chain carries N-acetylthreonine. At T2 the chain carries Phosphothreonine. A helical membrane pass occupies residues 40 to 60; it reads CAYFAVGGWLTGTTFVTSWYT. Residue H117 coordinates chlorophyll a. A helical membrane pass occupies residues 124-140; sequence GFMLRQFEIARAIGLRP. Pheophytin a is bound by residues Q129 and N142. The chain crosses the membrane as a helical span at residues 152–165; sequence VFVSVFLIYPLGQS. H197 contacts chlorophyll a. A helical membrane pass occupies residues 207–227; it reads AALLCAIHGATVENTLFEDGD. H214 and F261 together coordinate a plastoquinone. H214 contacts Fe cation. H268 contributes to the Fe cation binding site. Residues 278–294 traverse the membrane as a helical segment; sequence GLWMSAIGVVGLALNLR.

The protein belongs to the reaction center PufL/M/PsbA/D family. PSII is composed of 1 copy each of membrane proteins PsbA, PsbB, PsbC, PsbD, PsbE, PsbF, PsbH, PsbI, PsbJ, PsbK, PsbL, PsbM, PsbT, PsbX, PsbY, PsbZ, Psb30/Ycf12, at least 3 peripheral proteins of the oxygen-evolving complex and a large number of cofactors. It forms dimeric complexes. Requires The D1/D2 heterodimer binds P680, chlorophylls that are the primary electron donor of PSII, and subsequent electron acceptors. It shares a non-heme iron and each subunit binds pheophytin, quinone, additional chlorophylls, carotenoids and lipids. There is also a Cl(-1) ion associated with D1 and D2, which is required for oxygen evolution. The PSII complex binds additional chlorophylls, carotenoids and specific lipids. as cofactor.

The protein localises to the plastid. It localises to the chloroplast thylakoid membrane. The enzyme catalyses 2 a plastoquinone + 4 hnu + 2 H2O = 2 a plastoquinol + O2. Photosystem II (PSII) is a light-driven water:plastoquinone oxidoreductase that uses light energy to abstract electrons from H(2)O, generating O(2) and a proton gradient subsequently used for ATP formation. It consists of a core antenna complex that captures photons, and an electron transfer chain that converts photonic excitation into a charge separation. The D1/D2 (PsbA/PsbD) reaction center heterodimer binds P680, the primary electron donor of PSII as well as several subsequent electron acceptors. D2 is needed for assembly of a stable PSII complex. In Nephroselmis olivacea (Green alga), this protein is Photosystem II D2 protein.